Here is a 505-residue protein sequence, read N- to C-terminus: Geissoschizine oxidase (505 aa).

Residues 9 to 29 traverse the membrane as a helical segment; the sequence is FSSPAFFLLLPFLFLLIKPLI. Cys-443 contacts heme.

It belongs to the cytochrome P450 family. Heme is required as a cofactor. As to expression, mainly expressed in roots.

The protein resides in the membrane. The catalysed reaction is (19E)-geissoschizine + reduced [NADPH--hemoprotein reductase] + O2 = akuammicine + formate + oxidized [NADPH--hemoprotein reductase] + H2O + H(+). The enzyme catalyses (19E)-geissoschizine + reduced [NADPH--hemoprotein reductase] + O2 = 3,17-didehydrostemmadenine + oxidized [NADPH--hemoprotein reductase] + 2 H2O. It carries out the reaction 3,17-didehydrostemmadenine = 17-dehydropreakuammicine. The protein operates within alkaloid biosynthesis. In terms of biological role, monooxygenase involved in the biosynthesis of curare monoterpene indole alkaloids (MIAs), natural products such as strychnine, a neurotoxic compound used as a pesticide to control rodents, and its pharmacologically active derivatives, including brucine, used to regulate blood pressure. Curare alkaloids act as animal glycine receptor antagonists. Catalyzes the conversion of geissoschizine to dehydropreakuammicine by cyclization, which is spontaneously converted into akuammicine by aromatization. The chain is Geissoschizine oxidase from Strychnos nux-vomica (Poison nut).